The following is a 465-amino-acid chain: 3-isopropylmalate dehydratase large subunit (465 aa).

The [4Fe-4S] cluster site is built by cysteine 347, cysteine 407, and cysteine 410.

Belongs to the aconitase/IPM isomerase family. LeuC type 1 subfamily. As to quaternary structure, heterodimer of LeuC and LeuD. Requires [4Fe-4S] cluster as cofactor.

It catalyses the reaction (2R,3S)-3-isopropylmalate = (2S)-2-isopropylmalate. Its pathway is amino-acid biosynthesis; L-leucine biosynthesis; L-leucine from 3-methyl-2-oxobutanoate: step 2/4. Its function is as follows. Catalyzes the isomerization between 2-isopropylmalate and 3-isopropylmalate, via the formation of 2-isopropylmaleate. In Aeromonas hydrophila subsp. hydrophila (strain ATCC 7966 / DSM 30187 / BCRC 13018 / CCUG 14551 / JCM 1027 / KCTC 2358 / NCIMB 9240 / NCTC 8049), this protein is 3-isopropylmalate dehydratase large subunit.